The following is a 436-amino-acid chain: 3-ketoacyl-CoA thiolase (436 aa).

Catalysis depends on Cys99, which acts as the Acyl-thioester intermediate. Active-site proton acceptor residues include His392 and Cys422.

It belongs to the thiolase-like superfamily. Thiolase family. In terms of assembly, heterotetramer of two alpha chains (FadJ) and two beta chains (FadI).

It is found in the cytoplasm. The catalysed reaction is an acyl-CoA + acetyl-CoA = a 3-oxoacyl-CoA + CoA. It functions in the pathway lipid metabolism; fatty acid beta-oxidation. Functionally, catalyzes the final step of fatty acid oxidation in which acetyl-CoA is released and the CoA ester of a fatty acid two carbons shorter is formed. This Photobacterium profundum (strain SS9) protein is 3-ketoacyl-CoA thiolase.